The chain runs to 251 residues: Methionine aminopeptidase (251 aa).

Histidine 76 contributes to the substrate binding site. A divalent metal cation-binding residues include aspartate 93, aspartate 104, and histidine 168. Histidine 175 serves as a coordination point for substrate. Residues glutamate 202 and glutamate 233 each contribute to the a divalent metal cation site.

It belongs to the peptidase M24A family. Methionine aminopeptidase type 1 subfamily. As to quaternary structure, monomer. Requires Co(2+) as cofactor. The cofactor is Zn(2+). Mn(2+) is required as a cofactor. Fe(2+) serves as cofactor.

The catalysed reaction is Release of N-terminal amino acids, preferentially methionine, from peptides and arylamides.. Removes the N-terminal methionine from nascent proteins. The N-terminal methionine is often cleaved when the second residue in the primary sequence is small and uncharged (Met-Ala-, Cys, Gly, Pro, Ser, Thr, or Val). Requires deformylation of the N(alpha)-formylated initiator methionine before it can be hydrolyzed. In Staphylococcus epidermidis (strain ATCC 12228 / FDA PCI 1200), this protein is Methionine aminopeptidase.